Reading from the N-terminus, the 320-residue chain is Ferrochelatase (320 aa).

Fe cation is bound by residues H194 and E272.

Belongs to the ferrochelatase family.

The protein resides in the cytoplasm. It catalyses the reaction heme b + 2 H(+) = protoporphyrin IX + Fe(2+). It participates in porphyrin-containing compound metabolism; protoheme biosynthesis; protoheme from protoporphyrin-IX: step 1/1. Catalyzes the ferrous insertion into protoporphyrin IX. This Desulfotalea psychrophila (strain LSv54 / DSM 12343) protein is Ferrochelatase.